The primary structure comprises 316 residues: Glutathione synthetase (316 aa).

The region spanning 123–309 is the ATP-grasp domain; that stretch reads NEKISTLSFK…ISGILLDSIE (187 aa). 149–206 lines the ATP pocket; sequence FQEKFGDIILKPINKMGGDSVFYVKKNDPNVSVIIDQLTNYGNSFCLIQEYIKEILNG. Mg(2+)-binding residues include Glu280 and Asn282.

This sequence belongs to the prokaryotic GSH synthase family. Mg(2+) is required as a cofactor. The cofactor is Mn(2+).

It catalyses the reaction gamma-L-glutamyl-L-cysteine + glycine + ATP = glutathione + ADP + phosphate + H(+). The protein operates within sulfur metabolism; glutathione biosynthesis; glutathione from L-cysteine and L-glutamate: step 2/2. The sequence is that of Glutathione synthetase from Wigglesworthia glossinidia brevipalpis.